The chain runs to 273 residues: ATP synthase subunit a (273 aa).

Helical transmembrane passes span 44–64 (WHID…WLFY), 104–124 (IAPL…MDLI), 149–169 (DLNV…FYSI), 223–243 (LIFI…SVPW), and 244–264 (AIFH…LTIV).

Belongs to the ATPase A chain family. In terms of assembly, F-type ATPases have 2 components, CF(1) - the catalytic core - and CF(0) - the membrane proton channel. CF(1) has five subunits: alpha(3), beta(3), gamma(1), delta(1), epsilon(1). CF(0) has three main subunits: a(1), b(2) and c(9-12). The alpha and beta chains form an alternating ring which encloses part of the gamma chain. CF(1) is attached to CF(0) by a central stalk formed by the gamma and epsilon chains, while a peripheral stalk is formed by the delta and b chains.

It localises to the cell inner membrane. In terms of biological role, key component of the proton channel; it plays a direct role in the translocation of protons across the membrane. The polypeptide is ATP synthase subunit a (Shewanella putrefaciens (strain CN-32 / ATCC BAA-453)).